The sequence spans 387 residues: Mitogen-activated protein kinase homolog MMK1 (387 aa).

Residues 55–340 (KPPIMPIGKG…VEDALAHPYL (286 aa)) form the Protein kinase domain. ATP-binding positions include 61-69 (IGKGAYGIV) and K84. The Proton acceptor role is filled by D181. Phosphothreonine is present on T213. A TXY motif is present at residues 213 to 215 (TEY). Position 215 is a phosphotyrosine (Y215).

This sequence belongs to the protein kinase superfamily. CMGC Ser/Thr protein kinase family. MAP kinase subfamily. Mg(2+) is required as a cofactor. In terms of processing, dually phosphorylated on Thr-213 and Tyr-215, which activates the enzyme. Autophosphorylated. Roots and stems.

The catalysed reaction is L-seryl-[protein] + ATP = O-phospho-L-seryl-[protein] + ADP + H(+). It catalyses the reaction L-threonyl-[protein] + ATP = O-phospho-L-threonyl-[protein] + ADP + H(+). Activated by tyrosine and threonine phosphorylation. May play a role in the mitogenic induction of symbiotic root nodules on Alfalfa by Rhizobium signal molecules. This Medicago sativa (Alfalfa) protein is Mitogen-activated protein kinase homolog MMK1 (MMK1).